A 678-amino-acid chain; its full sequence is MADMEDLFGSEAESEAERKDSDSGSDSDSDQDNGASGSNASGSESDQDERGDSGQPSNKELFGDDSEEEGAPHHSGSDNHSEQSDNRSEASEERSDHEDNEPSDVDQHSGSEAHNDDDDDDDDEDDDDEGHRSDEGSHHSEAEGSEKAQSDDEKWDGEDKSDQSDDDEKLQNSDDEEREQGSDDEKLQNSADEEEKMQNTDDEDRAQLSDDDRQQLSEEEKGNSDDERPAASDNDEEKQNSDDEDRPQVSDEEKMQNSDDERPQVSDEDRRHSDDEEEQDQKSESARGSDSEDEVLRMKRKNAIPSDSEVDSDTEVPKDNNGTMDLFGGADDISSGSDGEDKPPTPGQPVDENGLPQDQQEEEPIPETRIEVEIPKVNTDLGNDLYFVKLPNFLSVEPRPFDPQYYEDEFEDEEMLDEEGRTRLKLKVENTIRWRMRRDEEGNEIKESNARIVKWSDGSMSLHLGNEVFDVYKAPLQGDHNHLFIRQGTGLQGQAVFKTKLTFRPHSTDSATHRKMTLSLADRCSKTQKIRILPMAGRDPECQRTEMIKKEEERLRASIRRESQQRRMREKQHQRGLSASYLEPDRYDEEEEGEESVSLAAIKNRYKGGIREERARIYSSDSDEGSEEDKAQRLLKAKKLNSDEEGESSGKRKAEDDDKANKKHKKYVISDEEEEEDD.

Over residues 1 to 14 the composition is skewed to acidic residues; the sequence is MADMEDLFGSEAES. Disordered stretches follow at residues 1–373, 559–596, and 613–678; these read MADM…IEVE, IRRE…GEES, and ERAR…EEDD. Residue alanine 2 is modified to N-acetylalanine. Phosphoserine occurs at positions 10 and 14. Positions 32–43 are enriched in low complexity; sequence DNGASGSNASGS. Serine 66 carries the post-translational modification Phosphoserine. Composition is skewed to basic and acidic residues over residues 70–97 and 105–114; these read GAPH…RSDH and VDQHSGSEAH. Residues 115-128 show a composition bias toward acidic residues; sequence NDDDDDDDDEDDDD. Over residues 129 to 163 the composition is skewed to basic and acidic residues; it reads EGHRSDEGSHHSEAEGSEKAQSDDEKWDGEDKSDQ. A phosphoserine mark is found at serine 161, serine 164, serine 173, serine 182, and serine 190. The span at 164–178 shows a compositional bias: acidic residues; sequence SDDDEKLQNSDDEER. Acidic residues predominate over residues 191-204; it reads ADEEEKMQNTDDED. Position 200 is a phosphothreonine (threonine 200). The segment covering 205-230 has biased composition (basic and acidic residues); that stretch reads RAQLSDDDRQQLSEEEKGNSDDERPA. A phosphoserine mark is found at serine 209, serine 217, serine 224, serine 232, serine 241, serine 250, serine 258, serine 266, serine 289, serine 291, serine 306, serine 308, and serine 312. Residues 237 to 297 show a composition bias toward basic and acidic residues; the sequence is EKQNSDDEDR…GSDSEDEVLR (61 aa). Over residues 328–337 the composition is skewed to low complexity; it reads GGADDISSGS. The span at 559–573 shows a compositional bias: basic and acidic residues; it reads IRRESQQRRMREKQH. Acidic residues predominate over residues 586–595; that stretch reads RYDEEEEGEE. Tyrosine 618 carries the post-translational modification Phosphotyrosine. Serine 619, serine 620, serine 622, serine 626, and serine 642 each carry phosphoserine. Residues 648 to 660 are compositionally biased toward basic and acidic residues; the sequence is SSGKRKAEDDDKA. Serine 670 is modified (phosphoserine).

This sequence belongs to the LEO1 family. As to quaternary structure, component of the PAF1 complex, which consists of CDC73, PAF1, LEO1, CTR9, RTF1 and SKIC8. The PAF1 complex interacts with PHF5A. Interacts with TCEA1, SUPT5H and CTNNB1. Interacts with SETD5.

It is found in the nucleus. Functionally, component of the PAF1 complex (PAF1C) which has multiple functions during transcription by RNA polymerase II and is implicated in regulation of development and maintenance of embryonic stem cell pluripotency. PAF1C associates with RNA polymerase II through interaction with POLR2A CTD non-phosphorylated and 'Ser-2'- and 'Ser-5'-phosphorylated forms and is involved in transcriptional elongation, acting both independently and synergistically with TCEA1 and in cooperation with the DSIF complex and HTATSF1. PAF1C is required for transcription of Hox and Wnt target genes. PAF1C is involved in hematopoiesis and stimulates transcriptional activity of KMT2A/MLL1. PAF1C is involved in histone modifications such as ubiquitination of histone H2B and methylation on histone H3 'Lys-4' (H3K4me3). PAF1C recruits the RNF20/40 E3 ubiquitin-protein ligase complex and the E2 enzyme UBE2A or UBE2B to chromatin which mediate monoubiquitination of 'Lys-120' of histone H2B (H2BK120ub1); UB2A/B-mediated H2B ubiquitination is proposed to be coupled to transcription. PAF1C is involved in mRNA 3' end formation probably through association with cleavage and poly(A) factors. Involved in polyadenylation of mRNA precursors. Connects PAF1C to Wnt signaling. This chain is RNA polymerase-associated protein LEO1 (Leo1), found in Rattus norvegicus (Rat).